The chain runs to 685 residues: tRNA-dihydrouridine(47) synthase [NAD(P)(+)]-like (685 aa).

Over residues 1 to 12 (MAATAAAAAAAP) the composition is skewed to low complexity. Disordered stretches follow at residues 1–91 (MAAT…SSSH), 209–234 (AANDDKKVNHDNLDGNDDENKEPLCN), and 257–314 (LIDN…SCRT). Residues 13–29 (PADPPDSSPAASSPPRP) are compositionally biased toward pro residues. The segment at 87–118 (KSSSHLCIEVGKSGNVSSCKYGDSCRFSHDID) adopts a C3H1-type zinc-finger fold. 2 stretches are compositionally biased toward basic and acidic residues: residues 209-221 (AANDDKKVNHDNL) and 273-284 (SKVESDEIDKHG). Residues 287 to 314 (TLNTNTESEDPNLSNGLEPSNNSSSCRT) show a composition bias toward polar residues. FMN is bound by residues 338 to 340 (PLT) and Gln-392. Cys-423 functions as the Proton donor in the catalytic mechanism. FMN is bound by residues Lys-462, His-492, 525 to 527 (NGD), and 550 to 551 (AR).

The protein belongs to the Dus family. Dus3 subfamily. FMN is required as a cofactor.

It catalyses the reaction 5,6-dihydrouridine(47) in tRNA + NAD(+) = uridine(47) in tRNA + NADH + H(+). The catalysed reaction is 5,6-dihydrouridine(47) in tRNA + NADP(+) = uridine(47) in tRNA + NADPH + H(+). It carries out the reaction a 5,6-dihydrouridine in mRNA + NAD(+) = a uridine in mRNA + NADH + H(+). The enzyme catalyses a 5,6-dihydrouridine in mRNA + NADP(+) = a uridine in mRNA + NADPH + H(+). Catalyzes the synthesis of dihydrouridine, a modified base found in the D-loop of most tRNAs. Specifically modifies U47 in cytoplasmic tRNAs. Catalyzes the synthesis of dihydrouridine in some mRNAs, thereby affecting their translation. The sequence is that of tRNA-dihydrouridine(47) synthase [NAD(P)(+)]-like from Oryza sativa subsp. japonica (Rice).